A 397-amino-acid chain; its full sequence is Ribosomal RNA large subunit methyltransferase I (397 aa).

The 78-residue stretch at 2–79 (SASIYLVKGR…KEETVDLDFF (78 aa)) folds into the PUA domain.

The protein belongs to the methyltransferase superfamily. RlmI family.

Its subcellular location is the cytoplasm. The catalysed reaction is cytidine(1962) in 23S rRNA + S-adenosyl-L-methionine = 5-methylcytidine(1962) in 23S rRNA + S-adenosyl-L-homocysteine + H(+). Functionally, specifically methylates the cytosine at position 1962 (m5C1962) of 23S rRNA. In Aeromonas hydrophila subsp. hydrophila (strain ATCC 7966 / DSM 30187 / BCRC 13018 / CCUG 14551 / JCM 1027 / KCTC 2358 / NCIMB 9240 / NCTC 8049), this protein is Ribosomal RNA large subunit methyltransferase I.